The sequence spans 540 residues: DM7 family protein GD24576 (540 aa).

A disordered region spans residues 416-443 (ATDTRGRDEIRTSCDQSQEKDEGSAEAD). The span at 417 to 443 (TDTRGRDEIRTSCDQSQEKDEGSAEAD) shows a compositional bias: basic and acidic residues.

This sequence belongs to the DM7 family.

This is DM7 family protein GD24576 from Drosophila simulans (Fruit fly).